We begin with the raw amino-acid sequence, 145 residues long: Arginine repressor (145 aa).

The protein belongs to the ArgR family.

The protein resides in the cytoplasm. It functions in the pathway amino-acid biosynthesis; L-arginine biosynthesis [regulation]. Regulates arginine biosynthesis genes. The protein is Arginine repressor of Streptococcus pyogenes serotype M3 (strain ATCC BAA-595 / MGAS315).